Reading from the N-terminus, the 792-residue chain is Ribosome biogenesis protein BOP1 homolog (792 aa).

Positions Met1–Val11 are enriched in basic residues. The tract at residues Met1–Ile167 is disordered. Acidic residues-rich tracts occupy residues Glu44–Asp53, Ser60–Gly72, Glu82–Ala117, and Glu157–Asp166. WD repeat units follow at residues Gly453 to Glu494, Asn496 to Ile534, Thr578 to Pro620, Lys623 to Lys661, Thr664 to Gln703, Leu707 to Gln746, and Arg762 to Thr792.

Belongs to the WD repeat BOP1/ERB1 family.

It localises to the nucleus. The protein localises to the nucleolus. It is found in the nucleoplasm. In terms of biological role, required for maturation of ribosomal RNAs and formation of the large ribosomal subunit. This chain is Ribosome biogenesis protein BOP1 homolog, found in Drosophila mojavensis (Fruit fly).